A 61-amino-acid polypeptide reads, in one-letter code: Metallothionein-1F (61 aa).

Met-1 is modified (N-acetylmethionine). The tract at residues 1–29 is beta; sequence MDPNCSCAAGVSCTCAGSCKCKECKCTSC. Cys-5, Cys-7, Cys-13, Cys-15, Cys-19, Cys-21, Cys-24, Cys-26, Cys-29, Cys-33, Cys-34, Cys-36, Cys-37, Cys-41, Cys-44, Cys-48, Cys-50, and Cys-57 together coordinate a divalent metal cation. The segment at 30-61 is alpha; the sequence is KKSCCSCCPVGCSKCAQGCVCKGASEKCSCCD. Ser-58 is modified (phosphoserine). A divalent metal cation-binding residues include Cys-59 and Cys-60.

It belongs to the metallothionein superfamily. Type 1 family. As to quaternary structure, monomer.

Functionally, metallothioneins have a high content of cysteine residues that bind various heavy metals; these proteins are transcriptionally regulated by both heavy metals and glucocorticoids. In Homo sapiens (Human), this protein is Metallothionein-1F (MT1F).